The following is a 330-amino-acid chain: Methionyl-tRNA formyltransferase (330 aa).

112-115 (SLLP) serves as a coordination point for (6S)-5,6,7,8-tetrahydrofolate.

The protein belongs to the Fmt family.

It catalyses the reaction L-methionyl-tRNA(fMet) + (6R)-10-formyltetrahydrofolate = N-formyl-L-methionyl-tRNA(fMet) + (6S)-5,6,7,8-tetrahydrofolate + H(+). Functionally, attaches a formyl group to the free amino group of methionyl-tRNA(fMet). The formyl group appears to play a dual role in the initiator identity of N-formylmethionyl-tRNA by promoting its recognition by IF2 and preventing the misappropriation of this tRNA by the elongation apparatus. This Synechocystis sp. (strain ATCC 27184 / PCC 6803 / Kazusa) protein is Methionyl-tRNA formyltransferase.